A 386-amino-acid polypeptide reads, in one-letter code: ADP,ATP carrier protein, mitochondrial (386 aa).

A mitochondrion-targeting transit peptide spans 1 to 77; the sequence is MADMNQHPTV…SNASPVFVQA (77 aa). Solcar repeat units lie at residues 84–177, 189–281, and 289–375; these read AAFA…FKRL, KWFA…LKPV, and DSFF…LQVL. The next 5 membrane-spanning stretches (helical) occupy residues 86–113, 154–178, 187–207, 257–278, and 292–312; these read FATD…VKLL, TANV…KRLF, YWKW…SSLF, FNIS…YDSL, and FASF…SYPI. Arg-159 and Lys-171 together coordinate ADP. ADP is bound at residue Arg-316. The tract at residues 316–321 is important for transport activity; it reads RRRMMM. Positions 316–321 match the Nucleotide carrier signature motif motif; that stretch reads RRRMMM. The chain crosses the membrane as a helical span at residues 352–372; sequence AGANILRAVAGAGVLAGYDKL.

It belongs to the mitochondrial carrier (TC 2.A.29) family. As to quaternary structure, monomer.

It localises to the mitochondrion inner membrane. The catalysed reaction is ADP(in) + ATP(out) = ADP(out) + ATP(in). The matrix-open state (m-state) is inhibited by the membrane-permeable bongkrekic acid (BKA). The cytoplasmic-open state (c-state) is inhibited by the membrane-impermeable toxic inhibitor carboxyatractyloside (CATR). In terms of biological role, ADP:ATP antiporter that mediates import of ADP into the mitochondrial matrix for ATP synthesis, and export of ATP out to fuel the cell. Cycles between the cytoplasmic-open state (c-state) and the matrix-open state (m-state): operates by the alternating access mechanism with a single substrate-binding site intermittently exposed to either the cytosolic (c-state) or matrix (m-state) side of the inner mitochondrial membrane. This is ADP,ATP carrier protein, mitochondrial (ANT) from Solanum tuberosum (Potato).